The primary structure comprises 361 residues: MAGNTIGQLFRVTTFGESHGLALGCIVDGVPPGIPLTEADLQHDLDRRRPGTSRYTTQRREPDQVKILSGVFEGVTTGTSIGLLIENTDQRSQDYGAIKDLFRPGHADYTYEQKYGLRDYRGGGRSSARETAMRVAAGAIAKKYLAAKFGIVIRGCLTQMGDIPLAIKDWNQVEQNPFFCPDPDKIDALDELMRGLKKEGDSIGAKVTVVADGVPPGLGEPVFDRLDADIAHALMSINAVKGVEIGDGFEVVKLRGSENRDEITKDGFQSNHAGGILGGISSGQQIVANIALKPTSSITVPGHTINRFGEEVEMITKGRHDPCVGIRAVPIAEAMLAIVLMDHFMRQRAQNGDVTTTIPRW.

Residues Arg-48 and Arg-54 each contribute to the NADP(+) site. FMN contacts are provided by residues 125-127 (RSS), 238-239 (NA), Gly-278, 293-297 (KPTSS), and Arg-319.

This sequence belongs to the chorismate synthase family. In terms of assembly, homotetramer. FMNH2 is required as a cofactor.

It catalyses the reaction 5-O-(1-carboxyvinyl)-3-phosphoshikimate = chorismate + phosphate. Its pathway is metabolic intermediate biosynthesis; chorismate biosynthesis; chorismate from D-erythrose 4-phosphate and phosphoenolpyruvate: step 7/7. Its function is as follows. Catalyzes the anti-1,4-elimination of the C-3 phosphate and the C-6 proR hydrogen from 5-enolpyruvylshikimate-3-phosphate (EPSP) to yield chorismate, which is the branch point compound that serves as the starting substrate for the three terminal pathways of aromatic amino acid biosynthesis. This reaction introduces a second double bond into the aromatic ring system. This chain is Chorismate synthase, found in Klebsiella pneumoniae (strain 342).